Consider the following 66-residue polypeptide: Small ribosomal subunit protein eS27 (66 aa).

The Zn(2+) site is built by Cys-21, Cys-24, Cys-40, and Cys-43. The segment at 21 to 43 (CPNCGNEQTIFSHATFPVRCLSC) adopts a C4-type zinc-finger fold.

The protein belongs to the eukaryotic ribosomal protein eS27 family. Part of the 30S ribosomal subunit. Zn(2+) is required as a cofactor.

The polypeptide is Small ribosomal subunit protein eS27 (Saccharolobus solfataricus (strain ATCC 35092 / DSM 1617 / JCM 11322 / P2) (Sulfolobus solfataricus)).